Consider the following 191-residue polypeptide: Recombination protein RecR (191 aa).

The segment at 56 to 71 adopts a C4-type zinc-finger fold; it reads CQNCNFLQSNNICHFC. The Toprim domain occupies 78–170; sequence KQLMIFETTS…KVTKLAQGLP (93 aa).

Belongs to the RecR family.

Its function is as follows. May play a role in DNA repair. It seems to be involved in an RecBC-independent recombinational process of DNA repair. It may act with RecF and RecO. This Mycoplasmopsis pulmonis (strain UAB CTIP) (Mycoplasma pulmonis) protein is Recombination protein RecR.